The primary structure comprises 1018 residues: Cell wall protein 1 (1018 aa).

The first 17 residues, 1–17, serve as a signal peptide directing secretion; that stretch reads MLPSIVISIVLASFVSA. One can recognise a CFEM 1 domain in the interval 32–143; the sequence is NPYTIYPSVA…SSLSAAATAV (112 aa). Disulfide bonds link Cys60/Cys100, Cys64/Cys95, Cys74/Cys81, and Cys83/Cys116. Heme is bound at residue Asp78. Residues 147-227 are disordered; it reads SEQPVETSSE…STPEDNPYTI (81 aa). The segment covering 148 to 164 has biased composition (polar residues); it reads EQPVETSSEPAGSSQSV. Low complexity predominate over residues 165 to 221; sequence ESSQPAETSSSEPAETSSSEPAETSSETSSEQPASSEPAETSSEESSTITSAPSTPE. CFEM domains follow at residues 223–334 and 393–504; these read NPYT…ATAV and SSSS…ATAV. 4 disulfide bridges follow: Cys251–Cys291, Cys255–Cys286, Cys265–Cys272, and Cys274–Cys307. A heme-binding site is contributed by Asp269. Residues 338-396 are disordered; it reads SEQSVETSSESAESSQSVESSQPAETSSEQPSETSSETSSQQLSSITSAPDSSATSSSS. 4 disulfide bridges follow: Cys421–Cys461, Cys425–Cys456, Cys435–Cys442, and Cys444–Cys477. Asp439 is a heme binding site. The disordered stretch occupies residues 507–557; sequence SDSASETASQEPSETSSEQPSETASQQPAETSSEESSTITSAPSTPEDNPY. The span at 509–553 shows a compositional bias: low complexity; that stretch reads SASETASQEPSETSSEQPSETASQQPAETSSEESSTITSAPSTPE. Residues 555–666 enclose the CFEM 4 domain; sequence NPYTIYPSVA…SSLNAAATAV (112 aa). 4 cysteine pairs are disulfide-bonded: Cys583/Cys623, Cys587/Cys618, Cys597/Cys604, and Cys606/Cys639. Asp601 lines the heme pocket. The disordered stretch occupies residues 677–785; the sequence is SASESASQVP…STSTKSDAAS (109 aa). Over residues 690–766 the composition is skewed to low complexity; it reads SAASSQSANN…AISESVAPSS (77 aa). Asn698, Asn708, Asn718, Asn729, Asn743, Asn753, Asn769, Asn798, and Asn965 each carry an N-linked (GlcNAc...) asparagine glycan. Over residues 767–785 the composition is skewed to polar residues; the sequence is YGNSTIAQPSTSTKSDAAS. Ser989 carries GPI-anchor amidated serine lipidation. Positions 990–1018 are cleaved as a propeptide — removed in mature form; sequence VAIANMANTKFASTMSLLVASFVFVGLFI.

Belongs to the RBT5 family. Post-translationally, the GPI-anchor is attached to the protein in the endoplasmic reticulum and serves to target the protein to the cell surface. There, the glucosamine-inositol phospholipid moiety is cleaved off and the GPI-modified mannoprotein is covalently attached via its lipidless GPI glycan remnant to the 1,6-beta-glucan of the outer cell wall layer.

Its subcellular location is the secreted. It localises to the cell wall. It is found in the membrane. Its function is as follows. Heme-binding protein involved in heme-iron utilization. The ability to acquire iron from host tissues is a major virulence factor of pathogenic microorganisms. Required for biofilm formation. The sequence is that of Cell wall protein 1 (CSA1) from Candida albicans (strain SC5314 / ATCC MYA-2876) (Yeast).